Consider the following 546-residue polypeptide: Probable protein kinase UbiB (546 aa).

The Protein kinase domain occupies 124 to 502; that stretch reads DFSVEPLASA…HVRQGQSRYL (379 aa). Residues 130–138 and lysine 153 contribute to the ATP site; that span reads LASASIAQV. Aspartate 288 serves as the catalytic Proton acceptor. The next 2 helical transmembrane spans lie at 501–521 and 522–542; these read YLFGIGAVLLLSGTLLFIHRP and EWGMMPGWLMAGGVVTWLIGW.

It belongs to the ABC1 family. UbiB subfamily.

It localises to the cell inner membrane. The protein operates within cofactor biosynthesis; ubiquinone biosynthesis [regulation]. Is probably a protein kinase regulator of UbiI activity which is involved in aerobic coenzyme Q (ubiquinone) biosynthesis. In Klebsiella pneumoniae (strain 342), this protein is Probable protein kinase UbiB.